The primary structure comprises 411 residues: MLINHLIVVLLISLVGTGGAEDDGLCSADQKSCAQSEPDQINEDEFSFKIRRQIEKANADYKPCSSDPQDSDCSCHANVLKRDLAPYKSTGVTRQMIESSARYGTKYKIYGHRLYRDANCMFPARCEGIEHFLLPLVATLPDMDLIINTRDYPQLNAAWGNAAGGPVFSFSKTKEYRDIMYPAWTFWAGGPATKLHPRGIGRWDQMREKLEKRAAAIPWSQKRSLGFFRGSRTSDERDSLILLSRRNPELVEAQYTKNQGWKSPKDTLDAPAADEVSFEDHCKYKYLFNFRGVAASFRLKHLFLCKSLVFHVGDEWQEFFYDQLKPWVHYVPLKSYPSQQEYEHILSFFKKNDALAQEIAQRGYDFIWEHLRMKDIKCYWRKLLKRYVKLLQYEVKPEDQLIYIGPKKDEL.

A signal peptide spans 1–20 (MLINHLIVVLLISLVGTGGA). Cystine bridges form between C64–C75, C73–C378, C120–C126, and C282–C305. The active-site Proton donor/acceptor is D151. An interaction with the consensus sequence C-X-S-X-[PA]-C in peptide substrates region spans residues 192 to 197 (ATKLHP). Residues 229 to 233 (RGSRT), R237, 276 to 278 (VSF), and 294 to 298 (AASFR) contribute to the UDP-alpha-D-glucose site. The Prevents secretion from ER signature appears at 408–411 (KDEL).

Belongs to the glycosyltransferase 90 family.

The protein resides in the endoplasmic reticulum lumen. It participates in protein modification; protein glycosylation. Its function is as follows. Protein O-glucosyltransferase. Catalyzes the reaction that attaches glucose through an O-glycosidic linkage to a conserved serine residue found in the consensus sequence C-X-S-X-[PA]-C in epidermal growth factor-like repeats. Regulates Notch signaling by glucosylating Notch in the ER, glucosylation is required for the correct folding and cleavage of Notch. This is O-glucosyltransferase rumi from Drosophila melanogaster (Fruit fly).